We begin with the raw amino-acid sequence, 425 residues long: Queuine tRNA-ribosyltransferase accessory subunit 2 (425 aa).

Residues 302–323 are disordered; that stretch reads QNGAQDLEKNSPEEDQEEEVVK. Zn(2+) is bound by residues Cys351, Cys353, Cys356, and His382.

This sequence belongs to the queuine tRNA-ribosyltransferase family. QTRT2 subfamily. Heterodimer of a catalytic subunit QTRT1 and an accessory subunit QTRT2. The cofactor is Zn(2+).

Its subcellular location is the cytoplasm. The protein resides in the mitochondrion outer membrane. Its function is as follows. Non-catalytic subunit of the queuine tRNA-ribosyltransferase (TGT) that catalyzes the base-exchange of a guanine (G) residue with queuine (Q) at position 34 (anticodon wobble position) in tRNAs with GU(N) anticodons (tRNA-Asp, -Asn, -His and -Tyr), resulting in the hypermodified nucleoside queuosine (7-(((4,5-cis-dihydroxy-2-cyclopenten-1-yl)amino)methyl)-7-deazaguanosine). This is Queuine tRNA-ribosyltransferase accessory subunit 2 from Gallus gallus (Chicken).